The primary structure comprises 251 residues: Octanoyltransferase (251 aa).

A BPL/LPL catalytic domain is found at A56–D241. Residues R96–H103, A168–G170, and G181–S183 each bind substrate. C199 serves as the catalytic Acyl-thioester intermediate.

Belongs to the LipB family.

It localises to the cytoplasm. The enzyme catalyses octanoyl-[ACP] + L-lysyl-[protein] = N(6)-octanoyl-L-lysyl-[protein] + holo-[ACP] + H(+). It participates in protein modification; protein lipoylation via endogenous pathway; protein N(6)-(lipoyl)lysine from octanoyl-[acyl-carrier-protein]: step 1/2. Catalyzes the transfer of endogenously produced octanoic acid from octanoyl-acyl-carrier-protein onto the lipoyl domains of lipoate-dependent enzymes. Lipoyl-ACP can also act as a substrate although octanoyl-ACP is likely to be the physiological substrate. The sequence is that of Octanoyltransferase from Burkholderia cenocepacia (strain HI2424).